Consider the following 391-residue polypeptide: 3-ketoacyl-CoA thiolase (391 aa).

Residue C95 is the Acyl-thioester intermediate of the active site. Active-site proton acceptor residues include H347 and C377.

The protein belongs to the thiolase-like superfamily. Thiolase family. As to quaternary structure, heterotetramer of two alpha chains (FadB) and two beta chains (FadA).

It localises to the cytoplasm. The enzyme catalyses an acyl-CoA + acetyl-CoA = a 3-oxoacyl-CoA + CoA. It participates in lipid metabolism; fatty acid beta-oxidation. Functionally, catalyzes the final step of fatty acid oxidation in which acetyl-CoA is released and the CoA ester of a fatty acid two carbons shorter is formed. In Stutzerimonas stutzeri (strain A1501) (Pseudomonas stutzeri), this protein is 3-ketoacyl-CoA thiolase.